We begin with the raw amino-acid sequence, 253 residues long: Ribosome-inactivating protein saporin-9 (253 aa).

E176 is an active-site residue.

It carries out the reaction Endohydrolysis of the N-glycosidic bond at one specific adenosine on the 28S rRNA.. Its function is as follows. Ribosome-inactivating protein of type 1, inhibits protein synthesis in animal cells. This chain is Ribosome-inactivating protein saporin-9 (SAP9), found in Saponaria officinalis (Common soapwort).